The primary structure comprises 455 residues: Probable glycine dehydrogenase (decarboxylating) subunit 1 (455 aa).

Belongs to the GcvP family. N-terminal subunit subfamily. In terms of assembly, the glycine cleavage system is composed of four proteins: P, T, L and H. In this organism, the P 'protein' is a heterodimer of two subunits.

The enzyme catalyses N(6)-[(R)-lipoyl]-L-lysyl-[glycine-cleavage complex H protein] + glycine + H(+) = N(6)-[(R)-S(8)-aminomethyldihydrolipoyl]-L-lysyl-[glycine-cleavage complex H protein] + CO2. Functionally, the glycine cleavage system catalyzes the degradation of glycine. The P protein binds the alpha-amino group of glycine through its pyridoxal phosphate cofactor; CO(2) is released and the remaining methylamine moiety is then transferred to the lipoamide cofactor of the H protein. This Saccharolobus solfataricus (strain ATCC 35092 / DSM 1617 / JCM 11322 / P2) (Sulfolobus solfataricus) protein is Probable glycine dehydrogenase (decarboxylating) subunit 1.